The primary structure comprises 221 residues: Large ribosomal subunit protein uL3 (221 aa).

The protein belongs to the universal ribosomal protein uL3 family. In terms of assembly, part of the 50S ribosomal subunit. Forms a cluster with proteins L14 and L19.

Functionally, one of the primary rRNA binding proteins, it binds directly near the 3'-end of the 23S rRNA, where it nucleates assembly of the 50S subunit. The polypeptide is Large ribosomal subunit protein uL3 (Nocardia farcinica (strain IFM 10152)).